A 194-amino-acid polypeptide reads, in one-letter code: Ribosome maturation factor RimM (194 aa).

In terms of domain architecture, PRC barrel spans 92 to 190 (DDGYYDHELI…ALVVTPPEGL (99 aa)).

This sequence belongs to the RimM family. As to quaternary structure, binds ribosomal protein uS19.

The protein localises to the cytoplasm. In terms of biological role, an accessory protein needed during the final step in the assembly of 30S ribosomal subunit, possibly for assembly of the head region. Essential for efficient processing of 16S rRNA. May be needed both before and after RbfA during the maturation of 16S rRNA. It has affinity for free ribosomal 30S subunits but not for 70S ribosomes. The polypeptide is Ribosome maturation factor RimM (Corynebacterium urealyticum (strain ATCC 43042 / DSM 7109)).